Reading from the N-terminus, the 102-residue chain is Large ribosomal subunit protein bL21 (102 aa).

Belongs to the bacterial ribosomal protein bL21 family. Part of the 50S ribosomal subunit. Contacts protein L20.

In terms of biological role, this protein binds to 23S rRNA in the presence of protein L20. This is Large ribosomal subunit protein bL21 from Lachnoclostridium phytofermentans (strain ATCC 700394 / DSM 18823 / ISDg) (Clostridium phytofermentans).